A 481-amino-acid chain; its full sequence is UDP-glycosyltransferase 85C2 (481 aa).

Residue H23 is the Proton acceptor of the active site. H23 is a binding site for an anthocyanidin. Catalysis depends on D120, which acts as the Charge relay. 8 residues coordinate UDP-alpha-D-glucose: T143, Q362, H377, W380, S382, E385, D401, and Q402.

Belongs to the UDP-glycosyltransferase family.

The enzyme catalyses steviol + UDP-alpha-D-glucose = steviolmonoside + UDP + H(+). It carries out the reaction steviolmonoside + UDP-alpha-D-glucose = rubusoside + UDP. Its function is as follows. Involved in the biosynthesis of steviol glycosides in leaves. Converts steviol to the mono-glycoside steviolmonoside. Converts the mono-glycoside steviolmonoside to the bi-glycoside rubusoside. This is UDP-glycosyltransferase 85C2 from Stevia rebaudiana (Stevia).